The following is a 166-amino-acid chain: UPF0178 protein BPUM_2255 (166 aa).

It belongs to the UPF0178 family.

This Bacillus pumilus (strain SAFR-032) protein is UPF0178 protein BPUM_2255.